A 353-amino-acid polypeptide reads, in one-letter code: Quinolinate synthase (353 aa).

The iminosuccinate site is built by H47 and S68. C113 is a [4Fe-4S] cluster binding site. Iminosuccinate contacts are provided by residues 139–141 (YAN) and S156. C200 contributes to the [4Fe-4S] cluster binding site. Iminosuccinate-binding positions include 226–228 (HPE) and T243. Residue C297 participates in [4Fe-4S] cluster binding.

It belongs to the quinolinate synthase family. Type 1 subfamily. The cofactor is [4Fe-4S] cluster.

It localises to the cytoplasm. It catalyses the reaction iminosuccinate + dihydroxyacetone phosphate = quinolinate + phosphate + 2 H2O + H(+). It functions in the pathway cofactor biosynthesis; NAD(+) biosynthesis; quinolinate from iminoaspartate: step 1/1. Functionally, catalyzes the condensation of iminoaspartate with dihydroxyacetone phosphate to form quinolinate. The sequence is that of Quinolinate synthase from Vibrio vulnificus (strain YJ016).